Consider the following 117-residue polypeptide: Anti-sigma F factor antagonist (117 aa).

One can recognise an STAS domain in the interval 2 to 115 (HFQLEMVTRE…QAIDRVRGIV (114 aa)). At Ser-58 the chain carries Phosphoserine.

Belongs to the anti-sigma-factor antagonist family. In terms of processing, phosphorylated by SpoIIAB on a serine residue.

In the phosphorylated form it could act as an anti-anti-sigma factor that counteracts SpoIIAB and thus releases sigma f from inhibition. The chain is Anti-sigma F factor antagonist (spoIIAA) from Lysinibacillus sphaericus (Bacillus sphaericus).